A 281-amino-acid polypeptide reads, in one-letter code: Putative phosphatase/phosphodiesterase MPN_349 (281 aa).

Fe cation contacts are provided by Asp-12, Glu-43, Asn-44, and Asn-71. The active-site Proton donor is the His-72. Fe cation contacts are provided by His-158, His-183, and His-185.

The protein belongs to the YmdB-like family. Fe(3+) serves as cofactor.

The sequence is that of Putative phosphatase/phosphodiesterase MPN_349 from Mycoplasma pneumoniae (strain ATCC 29342 / M129 / Subtype 1) (Mycoplasmoides pneumoniae).